The following is a 117-amino-acid chain: Ig heavy chain V region 102 (117 aa).

A signal peptide spans 1 to 19 (MGWSCIILFLVATATGVHS). A framework-1 region spans residues 20 to 49 (HVQLQQPGAELVKPGASVKVSCKASGYTFT). A disulfide bond links C41 and C115. A complementarity-determining-1 region spans residues 50–54 (SYWMH). The interval 55–68 (WVKQRPGQGLEWIG) is framework-2. The tract at residues 69 to 85 (RIHPSDSDTNYNQKFKG) is complementarity-determining-2. Residues 86–117 (KATLTVDKSSSTAYMQLSSLTSEDSAVYYCAI) are framework-3.

This Mus musculus (Mouse) protein is Ig heavy chain V region 102.